The primary structure comprises 403 residues: Tyrosine--tRNA ligase (403 aa).

The short motif at Pro43–His52 is the 'HIGH' region element. Positions Lys227 to Ser231 match the 'KMSKS' region motif. Lys230 contributes to the ATP binding site. An S4 RNA-binding domain is found at Leu338 to Ile399.

The protein belongs to the class-I aminoacyl-tRNA synthetase family. TyrS type 2 subfamily. In terms of assembly, homodimer.

The protein resides in the cytoplasm. The enzyme catalyses tRNA(Tyr) + L-tyrosine + ATP = L-tyrosyl-tRNA(Tyr) + AMP + diphosphate + H(+). Catalyzes the attachment of tyrosine to tRNA(Tyr) in a two-step reaction: tyrosine is first activated by ATP to form Tyr-AMP and then transferred to the acceptor end of tRNA(Tyr). The chain is Tyrosine--tRNA ligase from Nitrosospira multiformis (strain ATCC 25196 / NCIMB 11849 / C 71).